The following is a 130-amino-acid chain: MIQQETILQVADNSGVKKVMCVKVLGGSKKRYATLGDEIIVAVKEAQPAYGLRDGQGKKVHNKAVQRAVVVRTKKEVRRPDGTYIRFDDNAVAIIDDKGNPKGTRIFGPVARELRDKKYMKIISLAPEVL.

It belongs to the universal ribosomal protein uL14 family. As to quaternary structure, part of the 50S ribosomal subunit. Forms a cluster with proteins L3 and L19. In the 70S ribosome, L14 and L19 interact and together make contacts with the 16S rRNA in bridges B5 and B8.

Binds to 23S rRNA. Forms part of two intersubunit bridges in the 70S ribosome. This is Large ribosomal subunit protein uL14 from Leptospira biflexa serovar Patoc (strain Patoc 1 / Ames).